Reading from the N-terminus, the 292-residue chain is ABC transporter ATP-binding protein YtrB (292 aa).

Positions 2–227 (IELRQLSKAI…YIKIQMAFDT (226 aa)) constitute an ABC transporter domain. 34 to 41 (GRNGSGKT) is an ATP binding site.

Belongs to the ABC transporter superfamily. In terms of assembly, the complex is composed of 2 ATP-binding proteins (YtrB and YtrE), 2 transmembrane proteins (YtrC and YtrD) and a solute-binding protein (YtrF).

Its subcellular location is the cell membrane. Part of the ABC transporter complex YtrBCDEF that plays a role in acetoin utilization during stationary phase and sporulation. The protein is ABC transporter ATP-binding protein YtrB (ytrB) of Bacillus subtilis (strain 168).